The chain runs to 290 residues: ATP synthase gamma chain (290 aa).

Belongs to the ATPase gamma chain family. In terms of assembly, F-type ATPases have 2 components, CF(1) - the catalytic core - and CF(0) - the membrane proton channel. CF(1) has five subunits: alpha(3), beta(3), gamma(1), delta(1), epsilon(1). CF(0) has three main subunits: a, b and c.

The protein localises to the cell inner membrane. Its function is as follows. Produces ATP from ADP in the presence of a proton gradient across the membrane. The gamma chain is believed to be important in regulating ATPase activity and the flow of protons through the CF(0) complex. This Erythrobacter litoralis (strain HTCC2594) protein is ATP synthase gamma chain.